The following is a 304-amino-acid chain: Glutaminase (304 aa).

7 residues coordinate substrate: serine 63, asparagine 114, glutamate 158, asparagine 165, tyrosine 189, tyrosine 240, and valine 258.

This sequence belongs to the glutaminase family. Homotetramer.

It carries out the reaction L-glutamine + H2O = L-glutamate + NH4(+). The chain is Glutaminase from Shewanella baltica (strain OS223).